A 3014-amino-acid chain; its full sequence is Cadherin EGF LAG seven-pass G-type receptor 1 (3014 aa).

The signal sequence occupies residues 1-20 (MAPPPPPVLPVLLLLAAAAA). The Extracellular portion of the chain corresponds to 22–2469 (PAMGLRAAAW…RENGEVLPLK (2448 aa)). Residues 205 to 242 (AGTPSASPSPSPPLPPNLPEARAGPARRARRGTSGRGS) are disordered. The segment covering 211–222 (SPSPSPPLPPNL) has biased composition (pro residues). 9 Cadherin domains span residues 246 to 353 (PMPN…SPVF), 354 to 459 (EQSE…YPQF), 460 to 565 (SEQN…EPIF), 566 to 687 (VSSP…DPVF), 688 to 789 (TQPT…RPVF), 790 to 892 (QSSH…APQF), 893 to 999 (LWDF…APMF), 1000 to 1101 (EKDE…PPVL), and 1106 to 1224 (ILFN…SPLL). 4 N-linked (GlcNAc...) asparagine glycosylation sites follow: asparagine 403, asparagine 546, asparagine 634, and asparagine 778. N-linked (GlcNAc...) asparagine glycans are attached at residues asparagine 1114, asparagine 1139, asparagine 1213, asparagine 1249, asparagine 1259, and asparagine 1287. The EGF-like 1; calcium-binding domain occupies 1303 to 1361 (DDNICLREPCENYMKCVSVLRFDSSAPFLSSTTVLFRPIHPINGLRCRCPPGFTGDYCE). Disulfide bonds link cysteine 1307–cysteine 1318, cysteine 1312–cysteine 1349, cysteine 1351–cysteine 1360, cysteine 1367–cysteine 1378, cysteine 1372–cysteine 1387, cysteine 1389–cysteine 1398, cysteine 1407–cysteine 1418, cysteine 1412–cysteine 1428, and cysteine 1430–cysteine 1440. An EGF-like 2; calcium-binding domain is found at 1363-1399 (EIDLCYSDPCGANGRCRSREGGYTCECFEDFTGEHCE). In terms of domain architecture, EGF-like 3; calcium-binding spans 1403–1441 (RSGRCANGVCKNGGTCVNLLIGGFHCVCPPGEYERPYCE). A Laminin G-like 1 domain is found at 1442–1646 (VTTRSFPPQS…IANNGTREGC (205 aa)). Asparagine 1576, asparagine 1623, and asparagine 1640 each carry an N-linked (GlcNAc...) asparagine glycan. 13 disulfides stabilise this stretch: cysteine 1620–cysteine 1646, cysteine 1653–cysteine 1664, cysteine 1658–cysteine 1673, cysteine 1675–cysteine 1684, cysteine 1840–cysteine 1870, cysteine 1876–cysteine 1887, cysteine 1881–cysteine 1896, cysteine 1898–cysteine 1907, cysteine 1911–cysteine 1922, cysteine 1916–cysteine 1934, cysteine 1936–cysteine 1945, cysteine 1953–cysteine 1966, and cysteine 1968–cysteine 1978. The EGF-like 4; calcium-binding domain maps to 1649 to 1685 (RRNFCDGRRCQNGGTCVNRWNMYLCECPLRFGGKNCE). Asparagine 1666 is subject to (3R)-3-hydroxyasparagine. A Laminin G-like 2 domain is found at 1689–1870 (PHPQLFSGES…ALKVRVKDGC (182 aa)). Residues 1872 to 1907 (VDDPCTSSPCPPNSRCHDAWEDYSCVCDKGYLGINC) form the EGF-like 5; calcium-binding domain. Position 1889 is a (3R)-3-hydroxyaspartate (aspartate 1889). The EGF-like 6; calcium-binding domain occupies 1908–1946 (VDACHLNPCENMGACVRSPGSPQGYVCECGPSHYGPYCE). Residues 1947 to 1979 (NKLDLPCPRGWWGNPVCGPCHCAVSKGFDPDCN) form the EGF-like 7; calcium-binding domain. An N-linked (GlcNAc...) asparagine glycan is attached at asparagine 1979. The 36-residue stretch at 1981-2016 (TNGQCQCKENYYKLLAQDTCLPCDCFPHGSHSRTCD) folds into the EGF-like 8; calcium-binding domain. Disulfide bonds link cysteine 1985–cysteine 2000, cysteine 1987–cysteine 2003, cysteine 2005–cysteine 2015, cysteine 2024–cysteine 2033, and cysteine 2036–cysteine 2048. The 48-residue stretch at 2003–2050 (CDCFPHGSHSRTCDMATGQCACKPGVIGRQCNRCDNPFAEVTTLGCEV) folds into the Laminin EGF-like domain. Residues asparagine 2103, asparagine 2122, and asparagine 2257 are each glycosylated (N-linked (GlcNAc...) asparagine). Residues 2291 to 2328 (PEEKEGPLLRPAGRRTTPQTTRPGPGTEREAPISRRRR) form a disordered region. The GAIN-B domain maps to 2297–2461 (PLLRPAGRRT…AVLMDISRRE (165 aa)). Residues 2300 to 2316 (RPAGRRTTPQTTRPGPG) are compositionally biased toward low complexity. Intrachain disulfides connect cysteine 2411-cysteine 2443 and cysteine 2431-cysteine 2445. Residues 2411 to 2461 (CVFWNHSLAVGGTGGWSARGCELLSRNRTHVACQCSHTASFAVLMDISRRE) form a GPS region. Residues asparagine 2415 and asparagine 2437 are each glycosylated (N-linked (GlcNAc...) asparagine). Residues 2470–2490 (IVTYAAVSLSLAALLVAFVLL) form a helical membrane-spanning segment. The Cytoplasmic segment spans residues 2491-2501 (SLVRMLRSNLH). The chain crosses the membrane as a helical span at residues 2502–2522 (SIHKHLAVALFLSQLVFVIGI). The N-linked (GlcNAc...) asparagine glycan is linked to asparagine 2523. The Extracellular portion of the chain corresponds to 2523-2527 (NQTEN). The helical transmembrane segment at 2528–2548 (PFLCTVVAILLHYIYMSTFAW) threads the bilayer. Over 2549–2572 (TLVESLHVYRMLTEVRNIDTGPMR) the chain is Cytoplasmic. A helical membrane pass occupies residues 2573–2593 (FYYVVGWGIPAIVTGLAVGLD). Topologically, residues 2594 to 2611 (PQGYGNPDFCWLSLQDTL) are extracellular. Residues 2612–2632 (IWSFAGPIGAVIIINTVTSVL) form a helical membrane-spanning segment. The Cytoplasmic segment spans residues 2633 to 2655 (SAKVSCQRKHHYYGKKGIVSLLR). A helical membrane pass occupies residues 2656 to 2676 (TAFLLLLLISATWLLGLLAVN). The Extracellular portion of the chain corresponds to 2677 to 2683 (RDALSFH). A helical transmembrane segment spans residues 2684 to 2704 (YLFAIFSGLQGPFVLLFHCVL). Over 2705 to 3014 (NQEVRKHLKG…QADGSDSEKP (310 aa)) the chain is Cytoplasmic. Phosphoserine is present on residues serine 2761 and serine 2764. Disordered regions lie at residues 2777 to 2939 (SSGL…PPPL) and 2954 to 3014 (LADC…SEKP). The segment covering 2796 to 2806 (SCKDPPGHDSD) has biased composition (basic and acidic residues). Low complexity predominate over residues 2814 to 2825 (DEQSSSYASSHS). Phosphoserine is present on residues serine 2871 and serine 2873. Over residues 2876-2904 (PSGKPRLKVETKVSVELHREEQGSHRGEY) the composition is skewed to basic and acidic residues. The span at 2960–2969 (SPTSSRTSSL) shows a compositional bias: low complexity. Residues 2983–2992 (PGREPGRDHL) show a composition bias toward basic and acidic residues.

The protein belongs to the G-protein coupled receptor 2 family. LN-TM7 subfamily. Post-translationally, the iron and 2-oxoglutarate dependent 3-hydroxylation of aspartate and asparagine is (R) stereospecific within EGF domains.

It is found in the cell membrane. Receptor that may have an important role in cell/cell signaling during nervous system formation. The polypeptide is Cadherin EGF LAG seven-pass G-type receptor 1 (CELSR1) (Homo sapiens (Human)).